A 505-amino-acid chain; its full sequence is Glucan endo-1,3-beta-glucosidase 4 (505 aa).

The first 23 residues, 1 to 23 (MLLPRWFAEALLLLLSILACSNA), serve as a signal peptide directing secretion. 2 N-linked (GlcNAc...) asparagine glycosylation sites follow: Asn70 and Asn110. Glu119 acts as the Proton donor in catalysis. 2 N-linked (GlcNAc...) asparagine glycosylation sites follow: Asn178 and Asn256. Glu266 acts as the Nucleophile in catalysis. Asn298, Asn338, and Asn357 each carry an N-linked (GlcNAc...) asparagine glycan. The cysteines at positions 363 and 426 are disulfide-linked. N-linked (GlcNAc...) asparagine glycosylation occurs at Asn453. A lipid anchor (GPI-anchor amidated alanine) is attached at Ala474. The propeptide at 475–505 (NARIIFSYHLPILAPLALTLLQLLLQHDRLL) is removed in mature form.

The protein belongs to the glycosyl hydrolase 17 family. Contains two additional disulfide bonds.

The protein resides in the cell membrane. The enzyme catalyses Hydrolysis of (1-&gt;3)-beta-D-glucosidic linkages in (1-&gt;3)-beta-D-glucans.. The polypeptide is Glucan endo-1,3-beta-glucosidase 4 (Arabidopsis thaliana (Mouse-ear cress)).